Reading from the N-terminus, the 372-residue chain is SAM domain-containing protein SAMSN-1 (372 aa).

The interval 1-71 (MLKRKPSNAS…SGGSLGKKVR (71 aa)) is disordered. Residues 20 to 25 (RSSSFG) carry the Important for interaction with 14-3-3 proteins motif. Phosphoserine occurs at positions 23 and 34. Over residues 37–49 (KSDDSIEVHDREL) the composition is skewed to basic and acidic residues. Residues 52-63 (GSEEQSKTSSSG) are compositionally biased toward low complexity. Ser-74 is modified (phosphoserine). Thr-76 carries the phosphothreonine modification. 3 positions are modified to phosphoserine: Ser-90, Ser-97, and Ser-119. The disordered stretch occupies residues 90 to 111 (SEEKEEESGEEALPYRNSDPMI). Positions 129–146 (LYSGQSSSSGITSCSDGT) are enriched in low complexity. The disordered stretch occupies residues 129–153 (LYSGQSSSSGITSCSDGTSNRDSFR). Tyr-160 bears the Phosphotyrosine mark. The 62-residue stretch at 163–224 (PFCGRAKVHT…KFIYVDVILE (62 aa)) folds into the SH3 domain. The region spanning 241–305 (ENHQTIQEFL…LSAAESLLDE (65 aa)) is the SAM domain. A disordered region spans residues 304 to 372 (DEETTVEHEK…QKIAITESSD (69 aa)). The span at 317 to 329 (PLSSNPDILSASQ) shows a compositional bias: polar residues.

In terms of assembly, interacts with FASLG. Interacts with phosphotyrosine containing proteins. Interacts (via SH3 domain) with CTTN. Interacts (phosphorylated at Ser-23) with YWHAB, YWHAE, YWHAG, YWHAH, YWHAZ and SFN. Interacts directly with SAP30 and HDAC1. Identified in a complex with SAP30 and HDAC1. In terms of tissue distribution, detected in spleen and lymph node (at protein level).

It is found in the nucleus. It localises to the cytoplasm. The protein resides in the cell projection. Its subcellular location is the ruffle. In terms of biological role, negative regulator of B-cell activation. Down-regulates cell proliferation (in vitro). Promotes RAC1-dependent membrane ruffle formation and reorganization of the actin cytoskeleton. Regulates cell spreading and cell polarization. Stimulates HDAC1 activity. Regulates LYN activity by modulating its tyrosine phosphorylation. The chain is SAM domain-containing protein SAMSN-1 (Samsn1) from Mus musculus (Mouse).